A 458-amino-acid chain; its full sequence is Pyruvate kinase (458 aa).

Arg33 provides a ligand contact to substrate. K(+)-binding residues include Asn35, Ser37, and Asp67. Residue 35 to 38 (NASH) coordinates ATP. The ATP site is built by Arg74 and Lys148. Residue Glu214 coordinates Mg(2+). Residues Gly237, Asp238, and Thr270 each coordinate substrate. Asp238 contributes to the Mg(2+) binding site.

It belongs to the pyruvate kinase family. As to quaternary structure, homotetramer. A divalent metal cation serves as cofactor.

It carries out the reaction pyruvate + ATP = phosphoenolpyruvate + ADP + H(+). The protein operates within carbohydrate degradation; glycolysis; pyruvate from D-glyceraldehyde 3-phosphate: step 5/5. Not activated by classical allosteric effectors. The chain is Pyruvate kinase (pyk) from Aeropyrum pernix (strain ATCC 700893 / DSM 11879 / JCM 9820 / NBRC 100138 / K1).